A 57-amino-acid polypeptide reads, in one-letter code: Plasma membrane proteolipid 3 (57 aa).

Residues 34–54 (INILLTILGYLPGIVHALYII) traverse the membrane as a helical segment.

The protein belongs to the UPF0057 (PMP3) family.

It localises to the cell membrane. Functionally, plays a role in the regulation of membrane potential. Could mediate a proton leak. In Neurospora crassa (strain ATCC 24698 / 74-OR23-1A / CBS 708.71 / DSM 1257 / FGSC 987), this protein is Plasma membrane proteolipid 3 (pmp-1).